Consider the following 70-residue polypeptide: uncharacterized protein (70 aa).

A helical membrane pass occupies residues phenylalanine 50–isoleucine 70.

It belongs to the M.jannaschii MJ0023/MJ0349/MJ1072/MJ1074/MJ1107/MJECL16 family.

Its subcellular location is the membrane. This is an uncharacterized protein from Methanocaldococcus jannaschii (strain ATCC 43067 / DSM 2661 / JAL-1 / JCM 10045 / NBRC 100440) (Methanococcus jannaschii).